The chain runs to 543 residues: Zinc finger protein 852 (543 aa).

One can recognise a KRAB domain in the interval 8–82 (VAYEDLSEDY…TSGGLFGVVP (75 aa)). Serine 145 carries the post-translational modification Phosphoserine. 12 C2H2-type zinc fingers span residues 159–181 (YRCD…RRIH), 187–209 (YECN…LRTH), 215–237 (YECS…QRLH), 243–265 (YKCN…QRTH), 271–293 (YECK…QFLH), 299–321 (YKCN…QRTH), 327–349 (YKCN…QSLH), 355–377 (YKCS…ERIH), 383–405 (FKCS…QRLH), 411–433 (YKCN…QRIH), 439–461 (YECN…QRTH), and 467–489 (YKCN…QRVH).

It belongs to the krueppel C2H2-type zinc-finger protein family.

Its subcellular location is the nucleus. In terms of biological role, may be involved in transcriptional regulation. This Homo sapiens (Human) protein is Zinc finger protein 852 (ZNF852).